Here is a 534-residue protein sequence, read N- to C-terminus: Zinc finger protein 671 (534 aa).

The KRAB domain maps to 49–120; sequence VVFEDVFVYF…DQVDMTSATE (72 aa). A C2H2-type 1; degenerate zinc finger spans residues 192–214; that stretch reads YLCGACGKQFWFSTDFDQHQNQP. 9 C2H2-type zinc fingers span residues 285 to 307, 313 to 335, 341 to 363, 369 to 391, 397 to 419, 425 to 447, 451 to 473, 479 to 501, and 507 to 529; these read HRCGECGKAFTRKDTLARHQRIH, YECNECGKFFSQSYDLFKHQTVH, YECSECGKFFRQISGLIEHRRVH, YQCGKCGKFFSSKSNLIRHQEVH, YVCSECGKEFSRKHTLVLHQRTH, YECSECGKAFSQSSHLNVHWRIH, YECSRCGKAFSCISKLIQHQKVH, YECSKCGKAFTQRPNLIRHWKVH, and YVCSECGREFIRKQTLVLHQRVH.

It belongs to the krueppel C2H2-type zinc-finger protein family.

Its subcellular location is the nucleus. May be involved in transcriptional regulation. This is Zinc finger protein 671 (ZNF671) from Homo sapiens (Human).